Here is a 214-residue protein sequence, read N- to C-terminus: MTQDFGVYLVTGAEHSAGRSTAEVVEAAIRGGVDIVQLRDKTATARERYEVGTELRTLTRDAGVPLVVNDRLDLAAAIDADGVHLGDDDLPIEVAREQLGSDAIVGRSVSTPDAAREAEQAGADYLGVGAIYGTDSKDTDPEQSNIGLDRIRAVRDATSLPFVGIGGVTPDNAAPVVEAGADGVAVISAITAADDPEHATRRLADAVEGVAPNV.

4-amino-2-methyl-5-(diphosphooxymethyl)pyrimidine is bound by residues 37 to 41 and asparagine 69; that span reads QLRDK. Residues aspartate 70 and aspartate 89 each coordinate Mg(2+). Serine 108 serves as a coordination point for 4-amino-2-methyl-5-(diphosphooxymethyl)pyrimidine. 134-136 lines the 2-[(2R,5Z)-2-carboxy-4-methylthiazol-5(2H)-ylidene]ethyl phosphate pocket; the sequence is TDS. A 4-amino-2-methyl-5-(diphosphooxymethyl)pyrimidine-binding site is contributed by lysine 137. 2-[(2R,5Z)-2-carboxy-4-methylthiazol-5(2H)-ylidene]ethyl phosphate-binding positions include glycine 167 and 187 to 188; that span reads IS.

The protein belongs to the thiamine-phosphate synthase family. It depends on Mg(2+) as a cofactor.

The enzyme catalyses 2-[(2R,5Z)-2-carboxy-4-methylthiazol-5(2H)-ylidene]ethyl phosphate + 4-amino-2-methyl-5-(diphosphooxymethyl)pyrimidine + 2 H(+) = thiamine phosphate + CO2 + diphosphate. It carries out the reaction 2-(2-carboxy-4-methylthiazol-5-yl)ethyl phosphate + 4-amino-2-methyl-5-(diphosphooxymethyl)pyrimidine + 2 H(+) = thiamine phosphate + CO2 + diphosphate. It catalyses the reaction 4-methyl-5-(2-phosphooxyethyl)-thiazole + 4-amino-2-methyl-5-(diphosphooxymethyl)pyrimidine + H(+) = thiamine phosphate + diphosphate. It participates in cofactor biosynthesis; thiamine diphosphate biosynthesis; thiamine phosphate from 4-amino-2-methyl-5-diphosphomethylpyrimidine and 4-methyl-5-(2-phosphoethyl)-thiazole: step 1/1. Its function is as follows. Condenses 4-methyl-5-(beta-hydroxyethyl)thiazole monophosphate (THZ-P) and 2-methyl-4-amino-5-hydroxymethyl pyrimidine pyrophosphate (HMP-PP) to form thiamine monophosphate (TMP). This is Thiamine-phosphate synthase from Natronomonas pharaonis (strain ATCC 35678 / DSM 2160 / CIP 103997 / JCM 8858 / NBRC 14720 / NCIMB 2260 / Gabara) (Halobacterium pharaonis).